Consider the following 472-residue polypeptide: MASPPRCSPTAHDRECKLPPPSAPASEYCPGKLSWGTMARALGRFKLSIPHTHLLATLDPLALDREPPPHLLPEKHQVPEKLIWGDQDPLSKIPFKILSGHEHAVSTCHFCVDDTKLLSGSYDCTVKLWDPVDGSVVRDFEHRPKAPVVECSITGDSSRVIAASYDKTVRAWDLETGKLLWKVRYDTFIVSCKFSPDGKYVVSGFDVDHGICIMDAENITTVSVIKDHHTRSITSCCFDPDSQRVASVSLDRCIKIWDVTSQATLLTITKAHSNAISNCCFTFSGHFLCTSSWDKNLKIWNVHTGEFRNCGACVTLMQGHEGSVSSCHFARDSSFLISGGFDRTVAIWDVAEGYRKLSLKGHNDWVMDVAISNNKKWILSASKDRTMRLWNIEEIDEIPLVIKYKKAVGLKLKQCERCDRPFSIFKSDTSSEMFTQCVFCRIDTRGLPADTSSSSSSSERENSPPPRGSKDD.

A disordered region spans residues methionine 1–serine 22. 7 WD repeats span residues glycine 100 to aspartate 139, arginine 143 to lysine 182, arginine 184 to valine 224, histidine 228 to threonine 267, alanine 271 to cysteine 310, glycine 319 to serine 358, and glycine 361 to leucine 400. Positions leucine 447–aspartate 472 are disordered. The segment covering serine 458 to aspartate 472 has biased composition (basic and acidic residues).

This chain is WD repeat-containing protein 88 (WDR88), found in Homo sapiens (Human).